The chain runs to 236 residues: CD81 antigen (236 aa).

Topologically, residues 1-12 (MGVEGCTKCIKY) are cytoplasmic. A helical membrane pass occupies residues 13–33 (LLFVFNFVFWLAGGVILGVAL). The Extracellular segment spans residues 34–63 (WLRHDPQTTNLLYLELGDKPAPNTFYVGIY). Residues 64-84 (ILIAVGAVMMFVGFLGCYGAI) form a helical membrane-spanning segment. Over 85-89 (QESQC) the chain is Cytoplasmic. The chain crosses the membrane as a helical span at residues 90-112 (LLGTFFTCLVILFACEVAAGIWG). The Extracellular segment spans residues 113–201 (FVNKDQIAKD…QKIDDLFSGK (89 aa)). 2 cysteine pairs are disulfide-bonded: C156–C190 and C157–C175. A helical transmembrane segment spans residues 202-224 (LYLIGIAAIVVAVIMIFEMILSM). E219 is a binding site for cholesterol. Residues 225–236 (VLCCGIRNSSVY) are Cytoplasmic-facing.

Belongs to the tetraspanin (TM4SF) family. In terms of assembly, homodimer. Part of a complex composed of CD19, CR2/CD21, CD81 and IFITM1/CD225 in the membrane of mature B cells. Interacts (via the second extracellular domain) with CD19; this interaction is initiated early during biosynthesis in the ER and enables trafficking of only properly folded CD19. Part of a complex that includes MHC class II/HLA-DR molecules and IFITM1. Interacts with IFITM1. Interacts with IFITM2 and IFITM3. Part of integrin-tetraspanin complex composed of CD9, CD81, beta-1 and beta-2 integrins in the membrane of monocyte/macrophages. Interacts (via the second extracellular domain) with integrin ITGAV:ITGB3. Interacts with CD247/CD3 zeta, ICAM1 and CD9 at the immune synapse on T cell membrane. Part of a GPCR-tetraspanin complex consisting at least of ADGRG1, CD81, possibly CD9, and GNA11 in which CD81 enhances the association of ADGRG1 with GNA11. Part of a complex composed of CD9, CD81, PTGFRN and IGSF8. Interacts directly with IGSF8. Interacts with CD53 and SCIMP. Interacts with SAMHD1 (via its C-terminus). Interacts with glypican GPC3 and with the transcriptional repressor HHEX; binding to GPC3 decreases the availability of free CD81 for binding to HHEX, resulting in nuclear translocation of HHEX and transcriptional repression. Interacts with CLDN1. Interacts with CLDN6 and CLDN9. Not glycosylated. Post-translationally, likely constitutively palmitoylated at low levels. Protein palmitoylation is up-regulated upon coligation of BCR and CD9-C2R-CD81 complexes in lipid rafts.

The protein resides in the cell membrane. It localises to the basolateral cell membrane. Structural component of specialized membrane microdomains known as tetraspanin-enriched microdomains (TERMs), which act as platforms for receptor clustering and signaling. Essential for trafficking and compartmentalization of CD19 receptor on the surface of activated B cells. Upon initial encounter with microbial pathogens, enables the assembly of CD19-CR2/CD21 and B cell receptor (BCR) complexes at signaling TERMs, lowering the threshold dose of antigen required to trigger B cell clonal expansion and antibody production. In T cells, facilitates the localization of CD247/CD3 zeta at antigen-induced synapses with B cells, providing for costimulation and polarization toward T helper type 2 phenotype. Present in MHC class II compartments, may also play a role in antigen presentation. Can act both as positive and negative regulator of homotypic or heterotypic cell-cell fusion processes. Positively regulates sperm-egg fusion and may be involved in acrosome reaction. In myoblasts, associates with CD9 and PTGFRN and inhibits myotube fusion during muscle regeneration. In macrophages, associates with CD9 and beta-1 and beta-2 integrins, and prevents macrophage fusion into multinucleated giant cells specialized in ingesting complement-opsonized large particles. Also prevents the fusion of mononuclear cell progenitors into osteoclasts in charge of bone resorption. May regulate the compartmentalization of enzymatic activities. In T cells, defines the subcellular localization of dNTPase SAMHD1 and permits its degradation by the proteasome, thereby controlling intracellular dNTP levels. Also involved in cell adhesion and motility. Positively regulates integrin-mediated adhesion of macrophages, particularly relevant for the inflammatory response in the lung. The protein is CD81 antigen (CD81) of Pan troglodytes (Chimpanzee).